Here is a 544-residue protein sequence, read N- to C-terminus: Chaperonin GroEL (544 aa).

ATP contacts are provided by residues Thr-29–Pro-32, Lys-50, Asp-86–Thr-90, Gly-414, and Asp-494.

It belongs to the chaperonin (HSP60) family. In terms of assembly, forms a cylinder of 14 subunits composed of two heptameric rings stacked back-to-back. Interacts with the co-chaperonin GroES.

The protein localises to the cytoplasm. It catalyses the reaction ATP + H2O + a folded polypeptide = ADP + phosphate + an unfolded polypeptide.. Its function is as follows. Together with its co-chaperonin GroES, plays an essential role in assisting protein folding. The GroEL-GroES system forms a nano-cage that allows encapsulation of the non-native substrate proteins and provides a physical environment optimized to promote and accelerate protein folding. The polypeptide is Chaperonin GroEL (Amoebophilus asiaticus (strain 5a2)).